The chain runs to 102 residues: DET1- and DDB1-associated protein 1 (102 aa).

N-acetylalanine is present on Ala2. 2 positions are modified to phosphoserine: Ser33 and Ser95. Residues 67–102 (NAAKKRDQEQVEAEGESSAPPRKVARTDSPDMPEDT) form a disordered region.

It belongs to the DDA1 family. Component of numerous DCX (DDB1-CUL4-X-box) E3 ubiquitin-protein ligase complexes which consist of a core of DDB1, cullin-4 (CUL4A or CUL4B), DDA1 and RBX1. Component of the DCX(DCAF15) complex, also named CLR4(DCAF15) complex, composed of DCAF15, DDB1, cullin-4 (CUL4A or CUL4B), DDA1 and RBX1. Part of the DDD core complex containing DET1, DDA1 and DDB1; the DDD core complex recruits a specific UBE2E enzyme, such as UBE2E1, UBE2E2 UBE2E3, to form specific DDD-E2 complexes.

It functions in the pathway protein modification; protein ubiquitination. Functionally, functions as a component of numerous distinct DCX (DDB1-CUL4-X-box) E3 ubiquitin-protein ligase complexes which mediate the ubiquitination and subsequent proteasomal degradation of target proteins. In the DCX complexes, acts as a scaffolding subunit required to stabilize the complex. The protein is DET1- and DDB1-associated protein 1 of Mus musculus (Mouse).